We begin with the raw amino-acid sequence, 180 residues long: Shikimate kinase (180 aa).

14–19 (GAGKTC) lines the ATP pocket. T18 provides a ligand contact to Mg(2+). Residues D36, R60, and G82 each coordinate substrate. Residue R120 coordinates ATP. R139 lines the substrate pocket.

This sequence belongs to the shikimate kinase family. Monomer. Requires Mg(2+) as cofactor.

It is found in the cytoplasm. The catalysed reaction is shikimate + ATP = 3-phosphoshikimate + ADP + H(+). It participates in metabolic intermediate biosynthesis; chorismate biosynthesis; chorismate from D-erythrose 4-phosphate and phosphoenolpyruvate: step 5/7. Functionally, catalyzes the specific phosphorylation of the 3-hydroxyl group of shikimic acid using ATP as a cosubstrate. The protein is Shikimate kinase of Stenotrophomonas maltophilia (strain K279a).